Consider the following 195-residue polypeptide: Glycerol-3-phosphate acyltransferase (195 aa).

5 helical membrane passes run 2 to 22 (LWIF…GLFI), 52 to 72 (YGVA…LMAY), 78 to 98 (WIFI…SIFM), 112 to 132 (VFLA…LAVI), and 145 to 165 (FAVA…VPLA).

Belongs to the PlsY family. Probably interacts with PlsX.

The protein localises to the cell inner membrane. The enzyme catalyses an acyl phosphate + sn-glycerol 3-phosphate = a 1-acyl-sn-glycero-3-phosphate + phosphate. It participates in lipid metabolism; phospholipid metabolism. Catalyzes the transfer of an acyl group from acyl-phosphate (acyl-PO(4)) to glycerol-3-phosphate (G3P) to form lysophosphatidic acid (LPA). This enzyme utilizes acyl-phosphate as fatty acyl donor, but not acyl-CoA or acyl-ACP. The chain is Glycerol-3-phosphate acyltransferase from Maridesulfovibrio salexigens (strain ATCC 14822 / DSM 2638 / NCIMB 8403 / VKM B-1763) (Desulfovibrio salexigens).